The sequence spans 313 residues: MRRAALWLWLCALALRLQPALPQIVTANVPPEDQDGSGDDSDNFSGSGTGALPDMTLSRQTPSTWKDVWLLTATPTAPEPTSRDTEATLTSILPAGEKPEEGEPVAHVEAEPDFTARDKEKEATTRPRETTQLPVTQQASTAARATTAQASVTSHPHGDVQPGLHETLAPTAPGQPDHQPPSVEDGGTSVIKEVVEDETTNQLPAGEGSGEQDFTFETSGENTAVAGVEPDLRNQSPVDEGATGASQGLLDRKEVLGGVIAGGLVGLIFAVCLVAFMLYRMKKKDEGSYSLEEPKQANGGAYQKPTKQEEFYA.

An N-terminal signal peptide occupies residues M1–P22. Over Q23–G257 the chain is Extracellular. 2 disordered regions span residues A27 to S58 and A95 to G186. The segment covering E32–D42 has biased composition (acidic residues). S37 carries an O-linked (Xyl...) (chondroitin sulfate) serine glycan. N43 is a glycosylation site (N-linked (GlcNAc...) asparagine). O-linked (Xyl...) (heparan sulfate) serine glycans are attached at residues S45 and S47. Over residues E97 to E129 the composition is skewed to basic and acidic residues. Low complexity predominate over residues V135–S154. S209 and S219 each carry an O-linked (Xyl...) (chondroitin sulfate) serine glycan. The chain crosses the membrane as a helical span at residues G258–L278. Residues Y279–A313 are Cytoplasmic-facing. The segment covering E286–K295 has biased composition (basic and acidic residues). Positions E286–A313 are disordered. S288 carries the phosphoserine modification.

It belongs to the syndecan proteoglycan family. In terms of assembly, interacts with CDCP1. Interacts (via C-terminus) with TIAM1 (via PDZ domain). Interacts with MDK. Post-translationally, shedding is enhanced by a number of factors such as heparanase, thrombin or EGF. Also by stress and wound healing. PMA-mediated shedding is inhibited by TIMP3.

The protein localises to the membrane. It localises to the secreted. Its subcellular location is the extracellular exosome. Functionally, cell surface proteoglycan that contains both heparan sulfate and chondroitin sulfate and that links the cytoskeleton to the interstitial matrix. Regulates exosome biogenesis in concert with SDCBP and PDCD6IP. Able to induce its own expression in dental mesenchymal cells and also in the neighboring dental epithelial cells via an MSX1-mediated pathway. The sequence is that of Syndecan-1 from Rattus norvegicus (Rat).